The sequence spans 226 residues: Orotate phosphoribosyltransferase (226 aa).

Residues K26, 73 to 74, R100, K101, K104, H106, and 128 to 136 each bind 5-phospho-alpha-D-ribose 1-diphosphate; these read YK and EDVTTSGKS. Orotate-binding residues include T132 and R161.

Belongs to the purine/pyrimidine phosphoribosyltransferase family. PyrE subfamily. Homodimer. Mg(2+) serves as cofactor.

The enzyme catalyses orotidine 5'-phosphate + diphosphate = orotate + 5-phospho-alpha-D-ribose 1-diphosphate. It participates in pyrimidine metabolism; UMP biosynthesis via de novo pathway; UMP from orotate: step 1/2. Its function is as follows. Catalyzes the transfer of a ribosyl phosphate group from 5-phosphoribose 1-diphosphate to orotate, leading to the formation of orotidine monophosphate (OMP). The sequence is that of Orotate phosphoribosyltransferase from Agathobacter rectalis (strain ATCC 33656 / DSM 3377 / JCM 17463 / KCTC 5835 / VPI 0990) (Eubacterium rectale).